Here is a 258-residue protein sequence, read N- to C-terminus: Tryptophan synthase alpha chain (258 aa).

Catalysis depends on proton acceptor residues Glu-47 and Asp-58.

It belongs to the TrpA family. As to quaternary structure, tetramer of two alpha and two beta chains.

The catalysed reaction is (1S,2R)-1-C-(indol-3-yl)glycerol 3-phosphate + L-serine = D-glyceraldehyde 3-phosphate + L-tryptophan + H2O. The protein operates within amino-acid biosynthesis; L-tryptophan biosynthesis; L-tryptophan from chorismate: step 5/5. In terms of biological role, the alpha subunit is responsible for the aldol cleavage of indoleglycerol phosphate to indole and glyceraldehyde 3-phosphate. The sequence is that of Tryptophan synthase alpha chain from Bacillus cereus (strain ATCC 10987 / NRS 248).